The sequence spans 246 residues: Dolichol-phosphate mannosyltransferase subunit 1 (246 aa).

Residues Pro-20, Tyr-22, Glu-24, Val-49, Asp-51, Asp-104, Ala-105, Asp-106, Arg-133, Arg-220, and Lys-226 each contribute to the GDP-alpha-D-mannose site. Residue Asp-106 coordinates Mg(2+). Residue Asp-106 participates in Mn(2+) binding.

Belongs to the glycosyltransferase 2 family. As to quaternary structure, component of the dolichol-phosphate mannose (DPM) synthase complex composed of DPMS1, DPMS2 and DPMS3; in the complex interacts directly with DPMS3. Mg(2+) serves as cofactor. The cofactor is Mn(2+). It depends on Ca(2+) as a cofactor.

The protein localises to the endoplasmic reticulum membrane. The enzyme catalyses a di-trans,poly-cis-dolichyl phosphate + GDP-alpha-D-mannose = a di-trans,poly-cis-dolichyl beta-D-mannosyl phosphate + GDP. It functions in the pathway protein modification; protein glycosylation. Functionally, transfers mannose from GDP-mannose to dolichol monophosphate to form dolichol phosphate mannose (Dol-P-Man) which is the mannosyl donor in pathways leading to N-glycosylation, glycosyl phosphatidylinositol membrane anchoring, and O-mannosylation of proteins; catalytic subunit of the dolichol-phosphate mannose (DPM) synthase complex. Plays a role in plant development and physiology, sensitivity to ammonium stress and endoplasmic reticulum stress response. In Arabidopsis thaliana (Mouse-ear cress), this protein is Dolichol-phosphate mannosyltransferase subunit 1.